Reading from the N-terminus, the 267-residue chain is 3-methyl-2-oxobutanoate hydroxymethyltransferase (267 aa).

Residues D45 and D84 each coordinate Mg(2+). Residues 45–46 (DS), D84, and K113 each bind 3-methyl-2-oxobutanoate. E115 contributes to the Mg(2+) binding site. E182 (proton acceptor) is an active-site residue.

Belongs to the PanB family. As to quaternary structure, homodecamer; pentamer of dimers. Mg(2+) is required as a cofactor.

The protein resides in the cytoplasm. The enzyme catalyses 3-methyl-2-oxobutanoate + (6R)-5,10-methylene-5,6,7,8-tetrahydrofolate + H2O = 2-dehydropantoate + (6S)-5,6,7,8-tetrahydrofolate. The protein operates within cofactor biosynthesis; coenzyme A biosynthesis. In terms of biological role, catalyzes the reversible reaction in which hydroxymethyl group from 5,10-methylenetetrahydrofolate is transferred onto alpha-ketoisovalerate to form ketopantoate. This chain is 3-methyl-2-oxobutanoate hydroxymethyltransferase, found in Sulfurisphaera tokodaii (strain DSM 16993 / JCM 10545 / NBRC 100140 / 7) (Sulfolobus tokodaii).